Here is a 498-residue protein sequence, read N- to C-terminus: MRTNPTTSSPVVSTLEEKNLGRIAQIIGPVLDVVFPPGKMPNIYNALVVKGRETVGQQINVTCEVQQLLGNNRVRAVAMSATDGLMRGMEVIDTGAPLSVPVGGATLGRIFNVLGEPVDNLGPVDTRTTSPIHRSAPAFIQLDTKLSIFETGIKVVDLLAPYRRGGKIGLFGGAGVGKTVLIMELINNIAKAHGGVSVFGGVGERTREGNDLYMEMKESGVINEKNIAESKVALVYGQMNEPPGARMRVGLTALTMAEYFRDVNEQDVLLFIDNIFRFVQAGSEVSALLGRMPSAVGYQPTLSTEMGSLQERITSTKEGSITSIQAVYVPADDLTDPAPATTFAHLDATTVLSRVLAAKGIYPAVDPLDSTSTMLQPRIVGEEHYETAQRVKQTSQRYKELQDIIAILGLDELSEEDRLTVARARKIERFLSQPFFVAEVFTGSPGKYVGLGETIRGFQLILSGELDGLPEQAFYLVGNIDEATAKAMNLEVESKLKK.

172–179 (GGAGVGKT) lines the ATP pocket.

The protein belongs to the ATPase alpha/beta chains family. As to quaternary structure, F-type ATPases have 2 components, CF(1) - the catalytic core - and CF(0) - the membrane proton channel. CF(1) has five subunits: alpha(3), beta(3), gamma(1), delta(1), epsilon(1). CF(0) has four main subunits: a(1), b(1), b'(1) and c(9-12).

The protein localises to the plastid. It localises to the chloroplast thylakoid membrane. It carries out the reaction ATP + H2O + 4 H(+)(in) = ADP + phosphate + 5 H(+)(out). Produces ATP from ADP in the presence of a proton gradient across the membrane. The catalytic sites are hosted primarily by the beta subunits. The protein is ATP synthase subunit beta, chloroplastic of Chamaerops humilis (Mediterranean fan palm).